A 149-amino-acid polypeptide reads, in one-letter code: Calmodulin (149 aa).

An N-acetylalanine modification is found at Ala-2. EF-hand domains follow at residues Glu-8 to Asn-43, Pro-44 to Asp-79, Asp-81 to Lys-116, and Leu-117 to Lys-149. Asp-21, Asp-23, Asp-25, Thr-27, Glu-32, Asp-57, Asp-59, Asn-61, Thr-63, Glu-68, Asp-94, Asp-96, Asn-98, and Glu-105 together coordinate Ca(2+). The residue at position 116 (Lys-116) is an N6,N6,N6-trimethyllysine. Ca(2+) is bound by residues Asp-130, Asp-132, Asp-134, Gln-136, and Glu-141.

The protein belongs to the calmodulin family.

Its function is as follows. Calmodulin mediates the control of a large number of enzymes, ion channels and other proteins by Ca(2+). Among the enzymes to be stimulated by the calmodulin-Ca(2+) complex are a number of protein kinases and phosphatases. This chain is Calmodulin, found in Macrocystis pyrifera (Giant kelp).